We begin with the raw amino-acid sequence, 328 residues long: GMP reductase (328 aa).

Cys-176 (thioimidate intermediate) is an active-site residue. 205–228 contacts NADP(+); it reads IIADGGIRTHGDIAKSIRFGASMI.

It belongs to the IMPDH/GMPR family. GuaC type 2 subfamily.

It catalyses the reaction IMP + NH4(+) + NADP(+) = GMP + NADPH + 2 H(+). In terms of biological role, catalyzes the irreversible NADPH-dependent deamination of GMP to IMP. It functions in the conversion of nucleobase, nucleoside and nucleotide derivatives of G to A nucleotides, and in maintaining the intracellular balance of A and G nucleotides. This is GMP reductase from Streptococcus pneumoniae serotype 19F (strain G54).